A 954-amino-acid polypeptide reads, in one-letter code: Isoleucine--tRNA ligase (954 aa).

Residues proline 60 to histidine 70 carry the 'HIGH' region motif. Glutamate 564 is a binding site for L-isoleucyl-5'-AMP. The 'KMSKS' region motif lies at lysine 605–serine 609. ATP is bound at residue lysine 608. 4 residues coordinate Zn(2+): cysteine 923, cysteine 926, cysteine 943, and cysteine 946.

Belongs to the class-I aminoacyl-tRNA synthetase family. IleS type 1 subfamily. In terms of assembly, monomer. Zn(2+) serves as cofactor.

The protein localises to the cytoplasm. It catalyses the reaction tRNA(Ile) + L-isoleucine + ATP = L-isoleucyl-tRNA(Ile) + AMP + diphosphate. Functionally, catalyzes the attachment of isoleucine to tRNA(Ile). As IleRS can inadvertently accommodate and process structurally similar amino acids such as valine, to avoid such errors it has two additional distinct tRNA(Ile)-dependent editing activities. One activity is designated as 'pretransfer' editing and involves the hydrolysis of activated Val-AMP. The other activity is designated 'posttransfer' editing and involves deacylation of mischarged Val-tRNA(Ile). This is Isoleucine--tRNA ligase from Synechococcus sp. (strain ATCC 27144 / PCC 6301 / SAUG 1402/1) (Anacystis nidulans).